Consider the following 568-residue polypeptide: Involucrin (568 aa).

Disordered regions lie at residues 23–499 (CSPA…EKEL) and 517–568 (RKKH…HEVQ). The segment covering 25–36 (PAQTQQEQTKQP) has biased composition (low complexity). The segment covering 49–77 (TQEKGFPKHEEKEANPVKDLPEQESEHHQ) has biased composition (basic and acidic residues). Low complexity predominate over residues 78 to 88 (QPGPQKQQLQV). Over residues 89-106 (KKPEQELQEQELHSEKQP) the composition is skewed to basic and acidic residues. 3 stretches are compositionally biased toward low complexity: residues 107–121 (QEPQ…QQQR), 133–154 (HQQP…QDVL), and 172–181 (PELPLGQQQK). Over residues 193–213 (KQQKLHLVERHQEPQEQELHH) the composition is skewed to basic and acidic residues. Residues 217–232 (QKQQQPQEQELQLVQH) show a composition bias toward low complexity. Composition is skewed to basic and acidic residues over residues 266-333 (ESHE…HQET) and 345-456 (KPHE…HLGK). A compositionally biased stretch (low complexity) spans 457-467 (QQEQQIEYEGY). Position 472 is a phosphoserine (Ser472). 3 stretches are compositionally biased toward basic and acidic residues: residues 478–499 (KQEK…EKEL), 517–532 (RKKH…EKQI), and 551–568 (VKED…HEVQ).

The protein belongs to the involucrin family. Directly or indirectly cross-linked to cornifelin (CNFN). In terms of processing, substrate of transglutaminase. Specific glutamines or lysines are cross-linked to keratins, desmoplakin and to inter involucrin molecules. In terms of tissue distribution, keratinocytes of epidermis and other stratified squamous epithelia.

Its subcellular location is the cytoplasm. Functionally, part of the insoluble cornified cell envelope (CE) of stratified squamous epithelia. The polypeptide is Involucrin (Ivl) (Rattus norvegicus (Rat)).